The following is a 448-amino-acid chain: Probable glycine dehydrogenase (decarboxylating) subunit 1 (448 aa).

It belongs to the GcvP family. N-terminal subunit subfamily. The glycine cleavage system is composed of four proteins: P, T, L and H. In this organism, the P 'protein' is a heterodimer of two subunits.

The catalysed reaction is N(6)-[(R)-lipoyl]-L-lysyl-[glycine-cleavage complex H protein] + glycine + H(+) = N(6)-[(R)-S(8)-aminomethyldihydrolipoyl]-L-lysyl-[glycine-cleavage complex H protein] + CO2. The glycine cleavage system catalyzes the degradation of glycine. The P protein binds the alpha-amino group of glycine through its pyridoxal phosphate cofactor; CO(2) is released and the remaining methylamine moiety is then transferred to the lipoamide cofactor of the H protein. The protein is Probable glycine dehydrogenase (decarboxylating) subunit 1 of Staphylococcus carnosus (strain TM300).